Reading from the N-terminus, the 445-residue chain is NADH-quinone oxidoreductase subunit F (445 aa).

61–70 (GRGGAGFSTG) is an NAD(+) binding site. 174–221 (GAGRYICGEETALINSLEGRRANPRSKPPFPATSGVWGKPTCVNNVET) contacts FMN. [4Fe-4S] cluster-binding residues include Cys-351, Cys-354, Cys-357, and Cys-398.

It belongs to the complex I 51 kDa subunit family. Composed of 13 different subunits. Subunits NuoCD, E, F, and G constitute the peripheral sector of the complex. The cofactor is FMN. It depends on [4Fe-4S] cluster as a cofactor.

It catalyses the reaction a quinone + NADH + 5 H(+)(in) = a quinol + NAD(+) + 4 H(+)(out). Functionally, NDH-1 shuttles electrons from NADH, via FMN and iron-sulfur (Fe-S) centers, to quinones in the respiratory chain. The immediate electron acceptor for the enzyme in this species is believed to be ubiquinone. Couples the redox reaction to proton translocation (for every two electrons transferred, four hydrogen ions are translocated across the cytoplasmic membrane), and thus conserves the redox energy in a proton gradient. The sequence is that of NADH-quinone oxidoreductase subunit F (nuoF) from Salmonella typhimurium (strain LT2 / SGSC1412 / ATCC 700720).